The following is a 342-amino-acid chain: MKVDLFDFHLPEELIAQTPLPDRAASRLMVLDKRTGAIRHETFRNIISYLNPGDCLVLNDTRVMPARLYGEKEETGGTVEVLLLKQLDGDRWETLVKPGKRVKPGTKLTFGEGKLEAVCLDTLEHGGRVLEFSYDGLFYEVLAELGEMPLPPYIKEKLDDPERYQTVYAREIGSAAAPTAGLHFTEELLDAIREKGVHIVFITLHVGLGTFRPVQVDDVEKHDMHAEFYQMSEETAETLNRVREQGGRIIAVGTTSTRTLETIAGKHNGRFVAESGWTDIFIYPGYEFKGIDGLVTNFHLPKSTLIMLVSALAGRENILHAYQVAVKERYRFFSFGDAMLII.

The protein belongs to the QueA family. Monomer.

Its subcellular location is the cytoplasm. It catalyses the reaction 7-aminomethyl-7-carbaguanosine(34) in tRNA + S-adenosyl-L-methionine = epoxyqueuosine(34) in tRNA + adenine + L-methionine + 2 H(+). The protein operates within tRNA modification; tRNA-queuosine biosynthesis. Its function is as follows. Transfers and isomerizes the ribose moiety from AdoMet to the 7-aminomethyl group of 7-deazaguanine (preQ1-tRNA) to give epoxyqueuosine (oQ-tRNA). In Geobacillus kaustophilus (strain HTA426), this protein is S-adenosylmethionine:tRNA ribosyltransferase-isomerase.